The sequence spans 302 residues: Sulfate adenylyltransferase subunit 2 (302 aa).

It belongs to the PAPS reductase family. CysD subfamily. In terms of assembly, heterodimer composed of CysD, the smaller subunit, and CysN.

It catalyses the reaction sulfate + ATP + H(+) = adenosine 5'-phosphosulfate + diphosphate. The protein operates within sulfur metabolism; hydrogen sulfide biosynthesis; sulfite from sulfate: step 1/3. Its function is as follows. With CysN forms the ATP sulfurylase (ATPS) that catalyzes the adenylation of sulfate producing adenosine 5'-phosphosulfate (APS) and diphosphate, the first enzymatic step in sulfur assimilation pathway. APS synthesis involves the formation of a high-energy phosphoric-sulfuric acid anhydride bond driven by GTP hydrolysis by CysN coupled to ATP hydrolysis by CysD. The chain is Sulfate adenylyltransferase subunit 2 from Escherichia coli O9:H4 (strain HS).